The chain runs to 266 residues: Ribosomal RNA small subunit methyltransferase A (266 aa).

Positions 11, 13, 37, 57, 85, and 104 each coordinate S-adenosyl-L-methionine.

The protein belongs to the class I-like SAM-binding methyltransferase superfamily. rRNA adenine N(6)-methyltransferase family. RsmA subfamily.

The protein localises to the cytoplasm. The catalysed reaction is adenosine(1518)/adenosine(1519) in 16S rRNA + 4 S-adenosyl-L-methionine = N(6)-dimethyladenosine(1518)/N(6)-dimethyladenosine(1519) in 16S rRNA + 4 S-adenosyl-L-homocysteine + 4 H(+). Specifically dimethylates two adjacent adenosines (A1518 and A1519) in the loop of a conserved hairpin near the 3'-end of 16S rRNA in the 30S particle. May play a critical role in biogenesis of 30S subunits. This Campylobacter jejuni (strain RM1221) protein is Ribosomal RNA small subunit methyltransferase A.